The following is a 265-amino-acid chain: 4-diphosphocytidyl-2-C-methyl-D-erythritol kinase (265 aa).

Residue Lys-8 is part of the active site. Residue 95–105 participates in ATP binding; sequence PIGAGLGGGSS. The active site involves Asp-135.

The protein belongs to the GHMP kinase family. IspE subfamily.

The catalysed reaction is 4-CDP-2-C-methyl-D-erythritol + ATP = 4-CDP-2-C-methyl-D-erythritol 2-phosphate + ADP + H(+). Its pathway is isoprenoid biosynthesis; isopentenyl diphosphate biosynthesis via DXP pathway; isopentenyl diphosphate from 1-deoxy-D-xylulose 5-phosphate: step 3/6. In terms of biological role, catalyzes the phosphorylation of the position 2 hydroxy group of 4-diphosphocytidyl-2C-methyl-D-erythritol. The protein is 4-diphosphocytidyl-2-C-methyl-D-erythritol kinase of Ureaplasma parvum serovar 3 (strain ATCC 27815 / 27 / NCTC 11736).